The chain runs to 261 residues: Transmembrane protein 106A (261 aa).

Residues M1 to P23 form a disordered region. Residues L93 to L113 form a helical membrane-spanning segment.

The protein belongs to the TMEM106 family. In terms of tissue distribution, expressed in liver, spleen, lung, kidney, lymph nodes and adipose tissue (at protein level). Expressed by macrophages.

It localises to the cell membrane. Functionally, activates macrophages and polarizes them into M1-like macrophages through the activation of the MAPK and NF-kappaB signaling pathway. Upon activation, up-regulates the expression of CD80, CD86, CD69 and MHC II on macrophages, and induces the release of pro-inflammatory cytokines such as TNF, IL1B, IL6, CCL2 and nitric oxide. May play a role in inhibition of proliferation and migration. This Mus musculus (Mouse) protein is Transmembrane protein 106A (Tmem106a).